Reading from the N-terminus, the 2208-residue chain is MDEKISSLKDFVRKQIPDRPEFFYQKEALLSQVEVSLILTEGFKLMSCLVEVESCEKNSCVHNSEQKFVDTILAENGIVGPTLPKVMPDGYRYFNKTLLLLEVFVRVRPDEFEKKWKSDMGKLLSLKDDLLRCGISLVPIVDGRCSYNTSIIPEWATERFRWLLIELLKESKEAMDFEIEDQEYQRLIHSLSRTCNQSLGFENIEQLKKVHLNYEDRLNEVILAGLNSDLKESVIREELIKLKAWYKKEVFEKGHGNFVRTNQTSLLKTLQEIGSHAGTTVPECPMCCSKVFDLCYQMMLKIEGKESLNSSVSSDNNNPQISLVGREYLYVLSVCNKIKGKKIFNTRRNTLLFLDLIILNFVTEVFKKVPLGIQSLKVEGLIIGQMLLLTNDRALDILSARRLLIKKIECNESWVKKCGDTLRRVEPSFWTSVCNYVKLPDFESLLLLAEVLCSDAPLLRYEPVQVEESHCTHKDFQLLNINQQDCLFECLSHISLSLINSMKTSFSSRLLINEKDYKRYFGTVRLKECYVQRFLFTEGKCGFLFYQKTGERSRCFSIYLSENGQLTELGSFYADPKRYFLPIFSGCVLRSMCSEMITWLDFDEELMHVVKPQLRSLVLSILCSPTKRAQNFLQGLRYFIMAFVNQAHHKQLMSKLIVECKSASDVLIQRLATKVFYTILTFGEDPGIHMTRKFKFLLNVSYLCHLITKETPDRLTDQIKCFEKFLEPKLEFGSVVVNPSLNGILDPKQEDNMLNGLEKLFSKSLYDVEDLKRPGISKDVLNYCLSLFTRGKLKVTGVLKTDPFKPSFTSTALDLSSNKSVVVPKLDELGNIVSVYDKQKLISSCVASMAERFRTKGRFNLDPDTIDFLIMKNLTNLLSISGESPKASEELSLLYENLPEEITQVYDEIKNDIQVTLGKIGAKGSYKQKNGKEGKAGSPSNAETLESIWAPFGVLREIKIETSTHEIKDFDPGLLSMDIYEKLCTTVFESSLKSSFFIDEVLSICPLELLLKNLTTKSFKENDFFECFKYILIQAGYDQRLGTYEHRSRARFGFREEVVRLRDDVRVSDRESNSEAIAKRLDRSFFTSAALRNLCFYSEESPTEYTCVSSNTGNMKFGLSYKEQVGSNRELYVGDLNTKMMTRLVEDFAEAVCNSMHYTCLNSESEFDRAICDMKMAVNNGDLCLSMDHSKWGPFMSPALFHRFLSGAKLKTMRLGDSVDTKPVLNVLKWHIHKVVEVPYNVAEAYCTGMLKRRLGLMSLQTQSISEAFFHQEIQTKKEVPSHIMSVLDMGQGILHNLSDLYGLISEQFLNYCLDFLYDAIPTSYTSSDDQITMIRMPQQSMETAEEGNADWLELLCFHDFLSSKLNKFVSPKTVCGTFAAEFKSRFFVMGEETPLLTKFVSAALHNVKCKTPSQLAETIDTICDQCVANGVGVSIVSEISKRVNRLIKYSGYPLNPFLAVENQDVKDWVDGSRGYRLQRNIESCSIQESVLKQVRKFAKDVFLKIKRGQVFEEHLIQLIGADGDSAMEGFLSYVDCDKDKLREILEHRWLNLSANGDLRLVLRTKLMSSKRVLEKEQIPTLVKTLQSKLSKSFTKGAKKILAESINKSAFQASVASGFIGFCESVGSKCVRDGSGGFLYIREVVSKIISCQCTLCSANPGIIFCKNALSNVSNFSRPILWDYFSLVLTNACELGEWVFSPTKRPQQPNLLQNPNLFWAVKPKSVRLIEDQLGLGHVLQSIRRSYPKIFEEHLIPFMSDLQVNRTIDFTRLKYLDVCVAIDMMNENLGIVSHLLKRKDNSVYIVKQNECSVAHVREVQYVDHDIGLSPQQVCTNFKLQLVLSSMISPLVISTSVLKSFFWYNEVLKLEDNSLIDIGELTDFVILNKSYGVERVMYLEDMAMGYVVSSVDEPEIHLINAWVLTEHDVKKLESGSKVGDKDGKALAITLNIQFRHRRHSTKYHFTKGVVYSFTVEFQVPPSLQGPNLNTVPVREMVLNASGMLGDHQSLDGVPLVASHPLMTGKKPIDLLTLLSESDIQISDDTGQLMAVYLDFSEFQSLIEDKYSFKIVGPERLDTPIILKGGVYMSEGKRLSTLMVELSGNVIVKALGAIETDKEVGSLLLGLWPYIKTTGQKIKMDQNDFLLLYESHRELLLKSLEGLGGWLDFLDFSVCFSKSLSDLVISDNTGSLRLKGVTCRPIHNPRIVEDID.

An endonuclease region spans residues 26–284 (KEALLSQVEV…SHAGTTVPEC (259 aa)). Positions 51, 89, and 102 each coordinate Mn(2+). Lys-115 is a catalytic residue. The 199-residue stretch at 1172-1370 (CDMKMAVNNG…FLSSKLNKFV (199 aa)) folds into the RdRp catalytic domain. Asp-1330 provides a ligand contact to Mg(2+).

It belongs to the Bunyavirales RNA polymerase family. In terms of assembly, homomultimer; the oligomeric structure is essential for the polymerase activity. Interacts with nucleoprotein N. Interacts with protein Z; this interaction inhibits viral transcription and replication, Z partially blocks the product exit tunnel for the releasing nascent RNA product. It depends on Mn(2+) as a cofactor. Requires Mg(2+) as cofactor.

It is found in the virion. The protein resides in the host cytoplasm. The catalysed reaction is RNA(n) + a ribonucleoside 5'-triphosphate = RNA(n+1) + diphosphate. Its function is as follows. RNA-dependent RNA polymerase, which is responsible for the replication and transcription of the viral RNA genome using antigenomic RNA as an intermediate. During transcription, synthesizes subgenomic RNAs and assures their capping by a cap-snatching mechanism, which involves the endonuclease activity cleaving the host capped pre-mRNAs. These short capped RNAs are then used as primers for viral transcription. The 3'-end of subgenomic mRNAs molecules are heterogeneous and not polyadenylated. The replicase function is to direct synthesis of antigenomic and genomic RNA which are encapsidated and non capped. As a consequence of the use of the same enzyme for both transcription and replication, these mechanisms need to be well coordinated. These processes may be regulated by proteins N and Z in a dose-dependent manner. Z protein inhibits the viral polymerase L und thus the viral transcription and RNA synthesis. The chain is RNA-directed RNA polymerase L from Hylaeamys megacephalus (Large-headed rice rat).